Reading from the N-terminus, the 155-residue chain is Troponin C, isoform 2 (155 aa).

EF-hand domains lie at 11-46, 47-82, 87-122, and 123-155; these read EQIAVLQKAFNSFDHQKTGSIPTEMVADILRLMGQP, FDRQILDELIDEVDEDKSGRLEFEEFVQLAAKFIVE, AMQKELREAFRLYDKQGNGYIPTSCLKEILKELDDQ, and LTEQELDIMIEEIDSDGSGTVDFDEFMEMMTGE. Residues D60, D62, S64, R66, and E71 each contribute to the Ca(2+) site. Ca(2+)-binding residues include D136, D138, S140, T142, and E147.

The protein belongs to the troponin C family. Accumulates almost exclusively in larval muscles.

This is Troponin C, isoform 2 (TpnC47D) from Drosophila melanogaster (Fruit fly).